We begin with the raw amino-acid sequence, 175 residues long: Flagellar assembly factor FliW (175 aa).

This sequence belongs to the FliW family. As to quaternary structure, interacts with translational regulator CsrA and flagellin(s).

The protein resides in the cytoplasm. In terms of biological role, acts as an anti-CsrA protein, binds CsrA and prevents it from repressing translation of its target genes, one of which is flagellin. Binds to flagellin and participates in the assembly of the flagellum. In Bdellovibrio bacteriovorus (strain ATCC 15356 / DSM 50701 / NCIMB 9529 / HD100), this protein is Flagellar assembly factor FliW.